The following is a 281-amino-acid chain: sn-glycerol-3-phosphate transport system permease protein UgpE (281 aa).

The next 6 helical transmembrane spans lie at 16–36, 85–105, 113–133, 142–162, 202–222, and 247–267; these read LILG…AATL, FSIT…IVWF, FFWM…FPTV, LNSY…TFLF, ALFV…LLII, and WNQV…IVLA. Residues 77–268 enclose the ABC transmembrane type-1 domain; that stretch reads MLNSFIMAFS…IPPVVIVLAM (192 aa).

It belongs to the binding-protein-dependent transport system permease family. UgpAE subfamily. The complex is composed of two ATP-binding proteins (UgpC), two transmembrane proteins (UgpA and UgpE) and a solute-binding protein (UgpB).

It localises to the cell inner membrane. Its function is as follows. Part of the ABC transporter complex UgpBAEC involved in sn-glycerol-3-phosphate (G3P) import. Probably responsible for the translocation of the substrate across the membrane. This Salmonella typhi protein is sn-glycerol-3-phosphate transport system permease protein UgpE (ugpE).